An 82-amino-acid chain; its full sequence is uncharacterized protein (82 aa).

Transmembrane regions (helical) follow at residues 8-28 (LLSA…LPAP) and 50-70 (LYTV…YLVL).

Its subcellular location is the cell membrane. This is an uncharacterized protein from Klebsiella pneumoniae.